Here is a 299-residue protein sequence, read N- to C-terminus: ATP phosphoribosyltransferase (299 aa).

The protein belongs to the ATP phosphoribosyltransferase family. Long subfamily. Mg(2+) serves as cofactor.

Its subcellular location is the cytoplasm. It carries out the reaction 1-(5-phospho-beta-D-ribosyl)-ATP + diphosphate = 5-phospho-alpha-D-ribose 1-diphosphate + ATP. Its pathway is amino-acid biosynthesis; L-histidine biosynthesis; L-histidine from 5-phospho-alpha-D-ribose 1-diphosphate: step 1/9. With respect to regulation, feedback inhibited by histidine. In terms of biological role, catalyzes the condensation of ATP and 5-phosphoribose 1-diphosphate to form N'-(5'-phosphoribosyl)-ATP (PR-ATP). Has a crucial role in the pathway because the rate of histidine biosynthesis seems to be controlled primarily by regulation of HisG enzymatic activity. The protein is ATP phosphoribosyltransferase of Shewanella baltica (strain OS155 / ATCC BAA-1091).